We begin with the raw amino-acid sequence, 273 residues long: Ribosomal RNA small subunit methyltransferase A (273 aa).

S-adenosyl-L-methionine is bound by residues Asn-18, Leu-20, Gly-45, Glu-66, Asp-91, and Asn-113.

Belongs to the class I-like SAM-binding methyltransferase superfamily. rRNA adenine N(6)-methyltransferase family. RsmA subfamily.

Its subcellular location is the cytoplasm. It catalyses the reaction adenosine(1518)/adenosine(1519) in 16S rRNA + 4 S-adenosyl-L-methionine = N(6)-dimethyladenosine(1518)/N(6)-dimethyladenosine(1519) in 16S rRNA + 4 S-adenosyl-L-homocysteine + 4 H(+). In terms of biological role, specifically dimethylates two adjacent adenosines (A1518 and A1519) in the loop of a conserved hairpin near the 3'-end of 16S rRNA in the 30S particle. May play a critical role in biogenesis of 30S subunits. In Escherichia coli O1:K1 / APEC, this protein is Ribosomal RNA small subunit methyltransferase A.